Reading from the N-terminus, the 122-residue chain is Large ribosomal subunit protein bL12 (122 aa).

The protein belongs to the bacterial ribosomal protein bL12 family. In terms of assembly, homodimer. Part of the ribosomal stalk of the 50S ribosomal subunit. Forms a multimeric L10(L12)X complex, where L10 forms an elongated spine to which 2 to 4 L12 dimers bind in a sequential fashion. Binds GTP-bound translation factors.

In terms of biological role, forms part of the ribosomal stalk which helps the ribosome interact with GTP-bound translation factors. Is thus essential for accurate translation. The polypeptide is Large ribosomal subunit protein bL12 (Yersinia pseudotuberculosis serotype O:1b (strain IP 31758)).